Consider the following 605-residue polypeptide: Membrane protein insertase YidC (605 aa).

The chain crosses the membrane as a helical span at residues 8-28 (MIIAIALSLAVLLGWNYFVAA). Residues 35-47 (RQQQAQTSASPSP) are compositionally biased toward low complexity. The segment at 35–71 (RQQQAQTSASPSPKEGGPSAPVPGTLPGASGGNPQAA) is disordered. The next 4 membrane-spanning stretches (helical) occupy residues 377–397 (LFGN…LFFL), 451–471 (WPVV…FVTI), 496–516 (LFGL…WPIV), and 540–560 (FTFM…GLVI).

The protein belongs to the OXA1/ALB3/YidC family. Type 1 subfamily. Interacts with the Sec translocase complex via SecD. Specifically interacts with transmembrane segments of nascent integral membrane proteins during membrane integration.

It localises to the cell inner membrane. Its function is as follows. Required for the insertion and/or proper folding and/or complex formation of integral membrane proteins into the membrane. Involved in integration of membrane proteins that insert both dependently and independently of the Sec translocase complex, as well as at least some lipoproteins. Aids folding of multispanning membrane proteins. The polypeptide is Membrane protein insertase YidC (Methylobacterium nodulans (strain LMG 21967 / CNCM I-2342 / ORS 2060)).